We begin with the raw amino-acid sequence, 832 residues long: MLMSDVEKFGGDCGSSGGSGRPTLKLGTRASTLAKTPTSTGGRTFMTVEVRSRKRKASGASPAEGVGYGTSPYTSDDNRQGQISRSATCSLTAREQLSRINAIHTADSISAQKEAAKKLRDEEEVEVAPPEGESVIDEPDSVKEPAAAADAVADVATPVLGDIAPGAAGTRPGRGGHDDKGKRYSYQGAGGKIKEKEGGGGVKKAAASRASSKHIKLDIENALSGTEERYVLMASSRRRGGSKSDRRISRDVVIPDEIEVKALAAAMAEKVGDVLRVLSHMGVEARQNTAIGSDVASEVAERFSHRPKVVSKIQMERELSDISDSGLALEPRPPVVTVMGHVDHGKTSLLDVLRKSNVAEKEFRGITQHIGAYQIDVDGKKITFLDTPGHEAFSDMRARGTNVTDIVVLVVAADDGVMPQTVESINHVKTAGVSMVVAVNKIDRSDANVDKITNDLLQHGVVPEKLGGDVMIVPVSAKTGENLDKLKSSILLLAEMLELRAPVEGRAQGVVIESKIERNCGVVATVIVQRGTLRKGNVVVAGDGSYGKVRNMFDDSDNSVEEALPSMPVRVLGLDKVPKAGDVFLVMPSEKHARDLLEHRAGINLSRGRDSGRNDSVFTGPLFSMDRPEGVNMILKADVAGSLEAISRSVAQIEHEEVKFNILHKDIGDVTKSDILLAEAASAVVLAFNVKVDAQARDLVRQKDVDIRHHRVIYDLIDDVKGVVCGKLKPIIREVQVGLLVVREVFSSGKGGTVIGCYVSEGAVSRGALVKIYRNDAVTCEGKVKVLRRFKDDVKEVGHGLECGVLVEGAKDVAVGDVIKVLEVVEHARVVE.

Positions 1–10 (MLMSDVEKFG) are enriched in basic and acidic residues. Disordered stretches follow at residues 1 to 87 (MLMS…SRSA), 120 to 148 (RDEE…PAAA), and 163 to 201 (IAPG…GGGG). The span at 11 to 20 (GDCGSSGGSG) shows a compositional bias: gly residues. 2 stretches are compositionally biased toward polar residues: residues 29–42 (RAST…STGG) and 71–87 (SPYT…SRSA). Positions 331-500 (PRPPVVTVMG…LLLAEMLELR (170 aa)) constitute a tr-type G domain. Residues 340 to 347 (GHVDHGKT) form a G1 region. 340 to 347 (GHVDHGKT) provides a ligand contact to GTP. Positions 365 to 369 (GITQH) are G2. Residues 386–389 (DTPG) form a G3 region. Residues 386-390 (DTPGH) and 440-443 (NKID) contribute to the GTP site. Positions 440 to 443 (NKID) are G4. Residues 476–478 (SAK) form a G5 region.

Belongs to the TRAFAC class translation factor GTPase superfamily. Classic translation factor GTPase family. IF-2 subfamily.

It is found in the cytoplasm. One of the essential components for the initiation of protein synthesis. Protects formylmethionyl-tRNA from spontaneous hydrolysis and promotes its binding to the 30S ribosomal subunits. Also involved in the hydrolysis of GTP during the formation of the 70S ribosomal complex. The sequence is that of Translation initiation factor IF-2 from Anaplasma marginale (strain St. Maries).